Here is a 454-residue protein sequence, read N- to C-terminus: MCAARTPPLALVFRGTFVHSTWTCPMEVLRDHLLGVSDSGKIVFLEESSQQEKLAKEWCFKPCEIRELSHHEFFMPGLVDTHIHAPQYAFAGSNVDLPLLEWLNKYTFPTEQRFRSTDVAEEVYTRVVRRTLKNGTTTACYFGTIHTDSSLILAEITDKFGQRAFVGKVCMDLNDTVPEYKETTEESVKETERFVSEMLQKNYPRVKPIVTPRFTLSCTETLMSELGNIAKTHDLYIQSHISENREEIEAVKSLYPSYKNYTDVYDKNNLLTNKTVMAHGCYLSEEELNIFSERGASIAHCPNSNLSLSSGLLNVLEVLKHKVKIGLGTDVAGGYSYSMLDAIRRAVMVSNVLLINKVNEKNLTLKEVFRLATLGGSQALGLDSEIGNFEVGKEFDALLINPRASDSPIDLFYGDFVGDISEAVIQKFLYLGDDRNIEEVYVGGKQVVPFSSSV.

Residues His-82 and His-84 each coordinate Zn(2+). Residues 84–87, 213–214, 240–243, and Asp-330 contribute to the substrate site; these read HAPQ, RF, and HISE. Zn(2+) is bound by residues His-240 and Asp-330. Phosphoserine is present on Ser-453.

Belongs to the metallo-dependent hydrolases superfamily. ATZ/TRZ family. In terms of assembly, homodimer. The cofactor is Zn(2+).

The enzyme catalyses guanine + H2O + H(+) = xanthine + NH4(+). It participates in purine metabolism; guanine degradation; xanthine from guanine: step 1/1. In terms of biological role, catalyzes the hydrolytic deamination of guanine, producing xanthine and ammonia. This is Guanine deaminase from Mus musculus (Mouse).